Reading from the N-terminus, the 161-residue chain is Arachidonate 5-lipoxygenase-activating protein (161 aa).

Residues 1–8 (MDQEAVGN) are Lumenal-facing. A helical transmembrane segment spans residues 9-30 (IVLLAIVTLISVVQNGFFAHKV). Topologically, residues 31–52 (EHESKTHNGRSFQRTGTLAFER) are cytoplasmic. A helical transmembrane segment spans residues 53–77 (VYTANQNCVDAYPTFLVMLWSAGLL). Topologically, residues 78–80 (CSQ) are lumenal. The chain crosses the membrane as a helical span at residues 81–102 (VPAAFAGLMYLFVRQKYFVGYL). Topologically, residues 103 to 107 (GERTQ) are cytoplasmic. An intramembrane segment occupies 108-115 (STPGYIFG). The chain crosses the membrane as a helical span at residues 116–128 (KRIILFLFAMSLA). Topologically, residues 129-161 (GILNYFFIALFGSDFENYIKTVTTTISPLLLIP) are lumenal.

The protein belongs to the MAPEG family. Homotrimer. Interacts with LTC4S and ALOX5.

The protein localises to the nucleus membrane. The protein resides in the endoplasmic reticulum membrane. In terms of biological role, required for leukotriene biosynthesis by ALOX5 (5-lipoxygenase). Anchors ALOX5 to the membrane. Binds arachidonic acid, and could play an essential role in the transfer of arachidonic acid to ALOX5. Binds to MK-886, a compound that blocks the biosynthesis of leukotrienes. The sequence is that of Arachidonate 5-lipoxygenase-activating protein (ALOX5AP) from Bos taurus (Bovine).